The sequence spans 336 residues: COP9 signalosome complex subunit 5 (336 aa).

The region spanning 44 to 181 is the MPN domain; sequence VRISSVAMIK…IGAFRTIPEG (138 aa). His-127, His-129, and Asp-140 together coordinate Zn(2+). The JAMM motif signature appears at 127–140; the sequence is HSHPGYGCWLSGID.

This sequence belongs to the peptidase M67A family. CSN5 subfamily. As to quaternary structure, component of the COP9 signalosome (CSN) complex.

It is found in the cytoplasm. It localises to the nucleus. Functionally, catalytic component of the COP9 signalosome (CSN) complex that acts as an regulator of the ubiquitin (Ubl) conjugation pathway by mediating the deneddylation of the cullin subunit of SCF-type E3 ubiquitin-protein ligase complexes. The CSN complex is involved in the regulation of the circadian clock through its control of the stability of the SCF(FWD-1) complex. This Neurospora crassa (strain ATCC 24698 / 74-OR23-1A / CBS 708.71 / DSM 1257 / FGSC 987) protein is COP9 signalosome complex subunit 5 (csn-5).